We begin with the raw amino-acid sequence, 106 residues long: UPF0145 protein (106 aa).

Belongs to the UPF0145 family.

The protein is UPF0145 protein of Listeria grayi (Listeria murrayi).